The chain runs to 115 residues: MRVEILSSKIHRATVTDANLNYVGSITIDEELMRAANLLENQKVEILDVNNGERFATYVIKGKKGEICLNGAAARKVCIGDIVIIVAYASMKFKKAKKFSPTIVHVNAKNEMIKK.

S25 serves as the catalytic Schiff-base intermediate with substrate; via pyruvic acid. At S25 the chain carries Pyruvic acid (Ser). Residue T57 coordinates substrate. The Proton donor role is filled by Y58. 71-73 lines the substrate pocket; the sequence is GAA.

This sequence belongs to the PanD family. As to quaternary structure, heterooctamer of four alpha and four beta subunits. It depends on pyruvate as a cofactor. In terms of processing, is synthesized initially as an inactive proenzyme, which is activated by self-cleavage at a specific serine bond to produce a beta-subunit with a hydroxyl group at its C-terminus and an alpha-subunit with a pyruvoyl group at its N-terminus.

The protein resides in the cytoplasm. The enzyme catalyses L-aspartate + H(+) = beta-alanine + CO2. It functions in the pathway cofactor biosynthesis; (R)-pantothenate biosynthesis; beta-alanine from L-aspartate: step 1/1. Catalyzes the pyruvoyl-dependent decarboxylation of aspartate to produce beta-alanine. This chain is Aspartate 1-decarboxylase, found in Campylobacter curvus (strain 525.92).